A 208-amino-acid chain; its full sequence is LexA repressor (208 aa).

Positions 28 to 48 form a DNA-binding region, H-T-H motif; that stretch reads RAEIARQLGFRSANAAEEHLK. Residues Ser-125 and Lys-162 each act as for autocatalytic cleavage activity in the active site.

This sequence belongs to the peptidase S24 family. As to quaternary structure, homodimer.

It carries out the reaction Hydrolysis of Ala-|-Gly bond in repressor LexA.. Represses a number of genes involved in the response to DNA damage (SOS response), including recA and lexA. In the presence of single-stranded DNA, RecA interacts with LexA causing an autocatalytic cleavage which disrupts the DNA-binding part of LexA, leading to derepression of the SOS regulon and eventually DNA repair. In Alteromonas mediterranea (strain DSM 17117 / CIP 110805 / LMG 28347 / Deep ecotype), this protein is LexA repressor.